The following is a 387-amino-acid chain: 2-alkyl-3-oxoalkanoate reductase (387 aa).

Residue Tyr-190 is the Proton acceptor of the active site. Residue Lys-194 participates in NADP(+) binding.

Belongs to the 3-beta-HSD family.

It catalyses the reaction a (2R,3S)-2-alkyl-3-hydroxyalkanoate + NADP(+) = an (R)-2-alkyl-3-oxoalkanoate + NADPH + H(+). In terms of biological role, involved in olefin biosynthesis. Catalyzes the reversible stereospecific NADPH-dependent reduction of 2-alkyl-3-oxoalkanoic acids to 2-alkyl-3-hydroxyalkanoic acids. The S.oneidensis oleABCD genes produce 3,6,9,12,15,19,22,25,28-hentriacontanonaene, which may aid the cells in adapting to a sudden drop in temperature. The chain is 2-alkyl-3-oxoalkanoate reductase from Shewanella oneidensis (strain ATCC 700550 / JCM 31522 / CIP 106686 / LMG 19005 / NCIMB 14063 / MR-1).